Here is a 338-residue protein sequence, read N- to C-terminus: Solute carrier family 35 member G5 (338 aa).

Residues 1 to 27 (MAGSHPYFNLPDSTHPSPPSAPPSLRW) are disordered. Helical transmembrane passes span 37–57 (TNGL…VGPL), 67–87 (LPSL…ALLL), 102–122 (GWAC…YSAV), 160–180 (CGLL…LWTL), 190–210 (TLGY…LLVY), 221–241 (TVAF…LFVL), 250–270 (LLSW…FTCV), 281–301 (LVCA…YYML), and 305–325 (VALS…IITA). The region spanning 49–174 (LPAGFVGPLS…SILGLIIILG (126 aa)) is the EamA 1 domain. Residues 272 to 325 (YAVTKAHPALVCAVLHSEVVVALILQYYMLHETVALSDIMGAGVVLGSIAIITA) form the EamA 2 domain.

The protein belongs to the SLC35G solute transporter family. In terms of tissue distribution, expressed in placenta and testis.

It localises to the membrane. In Homo sapiens (Human), this protein is Solute carrier family 35 member G5 (SLC35G5).